Here is a 215-residue protein sequence, read N- to C-terminus: Peroxiredoxin 1 (215 aa).

Residues Val-2–Val-158 enclose the Thioredoxin domain. Cys-46 functions as the Cysteine sulfenic acid (-SOH) intermediate in the catalytic mechanism. Arg-121 serves as a coordination point for substrate.

This sequence belongs to the peroxiredoxin family. Prx6 subfamily. As to quaternary structure, homodecamer. Pentamer of dimers that assemble into a ring structure.

It localises to the cytoplasm. It carries out the reaction a hydroperoxide + [thioredoxin]-dithiol = an alcohol + [thioredoxin]-disulfide + H2O. Thiol-specific peroxidase that catalyzes the reduction of hydrogen peroxide and organic hydroperoxides to water and alcohols, respectively. Plays a role in cell protection against oxidative stress by detoxifying peroxides. In Sulfurisphaera tokodaii (strain DSM 16993 / JCM 10545 / NBRC 100140 / 7) (Sulfolobus tokodaii), this protein is Peroxiredoxin 1.